The primary structure comprises 33 residues: Cytochrome b6-f complex subunit 8 (33 aa).

Residues 2–22 (IFTLGWASLAAIFTFSIAMVV) form a helical membrane-spanning segment.

This sequence belongs to the PetN family. The 4 large subunits of the cytochrome b6-f complex are cytochrome b6, subunit IV (17 kDa polypeptide, PetD), cytochrome f and the Rieske protein, while the 4 small subunits are PetG, PetL, PetM and PetN. The complex functions as a dimer.

It is found in the cellular thylakoid membrane. In terms of biological role, component of the cytochrome b6-f complex, which mediates electron transfer between photosystem II (PSII) and photosystem I (PSI), cyclic electron flow around PSI, and state transitions. The chain is Cytochrome b6-f complex subunit 8 from Prochlorococcus marinus (strain NATL2A).